A 644-amino-acid polypeptide reads, in one-letter code: Chaperone protein DnaK (644 aa).

The residue at position 199 (threonine 199) is a Phosphothreonine; by autocatalysis. Basic and acidic residues predominate over residues 550–584 (ADKLDESEKQRAQDEIKRGREAMESGDLERMKASR). 2 disordered regions span residues 550–586 (ADKL…SRDS) and 599–644 (YSQA…EDKK). Residues 600–623 (SQAGPEQGAPGAEAGAGASQGASG) show a composition bias toward low complexity.

It belongs to the heat shock protein 70 family.

In terms of biological role, acts as a chaperone. The protein is Chaperone protein DnaK of Leptospira biflexa serovar Patoc (strain Patoc 1 / Ames).